The sequence spans 502 residues: Arabinose import ATP-binding protein AraG (502 aa).

ABC transporter domains are found at residues Leu6 to Arg241 and Arg252 to Ser497. Gly38 to Ser45 provides a ligand contact to ATP.

Belongs to the ABC transporter superfamily. Arabinose importer (TC 3.A.1.2.2) family. The complex is composed of two ATP-binding proteins (AraG), two transmembrane proteins (AraH) and a solute-binding protein (AraF).

It localises to the cell inner membrane. The catalysed reaction is L-arabinose(out) + ATP + H2O = L-arabinose(in) + ADP + phosphate + H(+). Its function is as follows. Part of the ABC transporter complex AraFGH involved in arabinose import. Responsible for energy coupling to the transport system. The polypeptide is Arabinose import ATP-binding protein AraG (Mannheimia succiniciproducens (strain KCTC 0769BP / MBEL55E)).